Consider the following 89-residue polypeptide: Abortive infection protein (89 aa).

It is found in the cell membrane. ABI may interact with a target in the cell membrane, which could be the product of the host's cmrA gene, and cause disruption of the cellular membrane such that lysis of the infected cell and death of the infecting phage would result. This Escherichia coli protein is Abortive infection protein (abi).